The primary structure comprises 37 residues: Large ribosomal subunit protein bL36 (37 aa).

The protein belongs to the bacterial ribosomal protein bL36 family.

The chain is Large ribosomal subunit protein bL36 from Rippkaea orientalis (strain PCC 8801 / RF-1) (Cyanothece sp. (strain PCC 8801)).